A 234-amino-acid polypeptide reads, in one-letter code: 7-cyano-7-deazaguanine synthase (234 aa).

13–23 contacts ATP; the sequence is LSGGQDSTTCL. Cys-193, Cys-201, Cys-204, and Cys-207 together coordinate Zn(2+).

The protein belongs to the QueC family. The cofactor is Zn(2+).

The catalysed reaction is 7-carboxy-7-deazaguanine + NH4(+) + ATP = 7-cyano-7-deazaguanine + ADP + phosphate + H2O + H(+). It participates in purine metabolism; 7-cyano-7-deazaguanine biosynthesis. Its function is as follows. Catalyzes the ATP-dependent conversion of 7-carboxy-7-deazaguanine (CDG) to 7-cyano-7-deazaguanine (preQ(0)). The polypeptide is 7-cyano-7-deazaguanine synthase (Chromobacterium violaceum (strain ATCC 12472 / DSM 30191 / JCM 1249 / CCUG 213 / NBRC 12614 / NCIMB 9131 / NCTC 9757 / MK)).